The sequence spans 420 residues: Phosphoribosylamine--glycine ligase (420 aa).

Residues 108–314 (KQFMEKYAIP…FAALIDALLH (207 aa)) enclose the ATP-grasp domain. 134-195 (LNERGVPIVI…EDFLAGEEFS (62 aa)) is an ATP binding site. The Mg(2+) site is built by glutamate 284 and asparagine 286.

It belongs to the GARS family. It depends on Mg(2+) as a cofactor. Requires Mn(2+) as cofactor.

The catalysed reaction is 5-phospho-beta-D-ribosylamine + glycine + ATP = N(1)-(5-phospho-beta-D-ribosyl)glycinamide + ADP + phosphate + H(+). It functions in the pathway purine metabolism; IMP biosynthesis via de novo pathway; N(1)-(5-phospho-D-ribosyl)glycinamide from 5-phospho-alpha-D-ribose 1-diphosphate: step 2/2. The protein is Phosphoribosylamine--glycine ligase of Listeria monocytogenes serovar 1/2a (strain ATCC BAA-679 / EGD-e).